The primary structure comprises 414 residues: TAR DNA-binding protein 43 (414 aa).

Glycyl lysine isopeptide (Lys-Gly) (interchain with G-Cter in SUMO2) cross-links involve residues Lys79, Lys84, Lys95, Lys102, and Lys181. RRM domains are found at residues 104 to 200 (SDLI…RCTE) and 191 to 262 (RKVF…NAEP). Ser183 is subject to Phosphoserine. Positions 216-414 (EVVDVFIPKP…MDSKSSGWGM (199 aa)) are interaction with UBQLN2. The span at 261-274 (EPKHNSNRQLERSG) shows a compositional bias: basic and acidic residues. Disordered regions lie at residues 261 to 301 (EPKH…GLGN) and 341 to 414 (ASQQ…GWGM). Lys263 is covalently cross-linked (Glycyl lysine isopeptide (Lys-Gly) (interchain with G-Cter in SUMO2)). The segment covering 275 to 301 (RFGGNPGGFGNQGGFGNSRGGGAGLGN) has biased composition (gly residues). Ser292 carries the phosphoserine modification. Arg293 carries the post-translational modification Omega-N-methylarginine. Composition is skewed to low complexity over residues 342–358 (SQQNQSGPSGNNQSQGS) and 368–392 (GSGNNSYSGSNSGAPLGWGSASNAG). Over residues 393 to 402 (SGSGFNGGFG) the composition is skewed to gly residues. A compositionally biased stretch (polar residues) spans 405–414 (MDSKSSGWGM).

Homodimer. Homooligomer (via its N-terminal domain). Interacts with BRDT. Binds specifically to pyrimidine-rich motifs of TAR DNA and to single stranded TG repeated sequences. Binds to RNA, specifically to UG repeated sequences with a minimum of six contiguous repeats. Interacts with ATXN2; the interaction is RNA-dependent. Interacts with MATR3. Interacts with UBQLN2. Interacts with HNRNPA2B1. Interacts with ZNF106. Interacts with CNOT7/CAF1. Interacts with CRY2. Interacts with PPIA/CYPA; the interaction is dependent on RNA-binding activity of TARDBP and PPIase activity of PPIA/CYPA. Acetylation of PPIA/CYPA at 'Lys-125' favors the interaction of TARDBP with PPIA/CYPA. Post-translationally, hyperphosphorylated. Ubiquitinated.

The protein localises to the nucleus. The protein resides in the cytoplasm. Its subcellular location is the stress granule. It is found in the mitochondrion. RNA-binding protein that is involved in various steps of RNA biogenesis and processing. Preferentially binds, via its two RNA recognition motifs RRM1 and RRM2, to GU-repeats on RNA molecules predominantly localized within long introns and in the 3'UTR of mRNAs. In turn, regulates the splicing of many non-coding and protein-coding RNAs including proteins involved in neuronal survival, as well as mRNAs that encode proteins relevant for neurodegenerative diseases. Plays a role in maintaining mitochondrial homeostasis by regulating the processing of mitochondrial transcripts. Also regulates mRNA stability by recruiting CNOT7/CAF1 deadenylase on mRNA 3'UTR leading to poly(A) tail deadenylation and thus shortening. In response to oxidative insult, associates with stalled ribosomes localized to stress granules (SGs) and contributes to cell survival. Also participates in the normal skeletal muscle formation and regeneration, forming cytoplasmic myo-granules and binding mRNAs that encode sarcomeric proteins. Plays a role in the maintenance of the circadian clock periodicity via stabilization of the CRY1 and CRY2 proteins in a FBXL3-dependent manner. Negatively regulates the expression of CDK6. Regulates the expression of HDAC6, ATG7 and VCP in a PPIA/CYPA-dependent manner. The protein is TAR DNA-binding protein 43 (Tardbp) of Mus musculus (Mouse).